A 996-amino-acid chain; its full sequence is GPI ethanolamine phosphate transferase 1 (996 aa).

Over 1–8 (MAAFPRFR) the chain is Cytoplasmic. Residues 9-29 (FLAIAVIFHFAYIFSIFDIYF) form a helical membrane-spanning segment. Over 30 to 463 (VSPIETGMRL…LQTYDWLFLR (434 aa)) the chain is Lumenal. 3 N-linked (GlcNAc...) asparagine glycosylation sites follow: asparagine 47, asparagine 147, and asparagine 210. Residues 464–484 (ALITIGYLGWIAYALTTVVDL) traverse the membrane as a helical segment. The Cytoplasmic portion of the chain corresponds to 485–495 (HVLHGRVRPSR). Residues 496-516 (TLGGGLFFTSVLVALYASLVI) form a helical membrane-spanning segment. Residues 517–518 (SK) are Lumenal-facing. The helical transmembrane segment at 519–539 (SPLTYYVYAFFPVFFWEEVYA) threads the bilayer. The Cytoplasmic portion of the chain corresponds to 540–560 (HRESLAAGRKELLGHINSGGS). Residues 561–581 (VASFVLNSALYVGVIESLALG) traverse the membrane as a helical segment. At 582–586 (YIHRE) the chain is on the lumenal side. A helical membrane pass occupies residues 587-607 (ILSVLFVLGSFWPFTHGLSFL). The Cytoplasmic portion of the chain corresponds to 608 to 612 (KKHGA). Residues 613-633 (LSATWFLACIAMSTFTLLPAM) traverse the membrane as a helical segment. Topologically, residues 634 to 637 (KAEN) are lumenal. The helical transmembrane segment at 638–658 (VNLITIGGVLMVVIGLLYLIF) threads the bilayer. Over 659–681 (EDFVLADFSWNAKPTSRNHLSRS) the chain is Cytoplasmic. A helical transmembrane segment spans residues 682-702 (LVGIQVGLTVLSIIITRSSAL). Residues 703 to 715 (SLQAKQGLPRGNQ) are Lumenal-facing. A helical membrane pass occupies residues 716-734 (IMGWVTLVASLLMPLAYRL). Residues 735–754 (RPNNHYMHRILVIFLTCAPT) lie on the Cytoplasmic side of the membrane. The helical transmembrane segment at 755–775 (FVILTISYEGLFYLVFSALLV) threads the bilayer. Over 776–822 (SWVRLEHAVQKFTSSKAPQTAATKKPTTTTESHLPAPFRPLTLHDAR) the chain is Lumenal. The chain crosses the membrane as a helical span at residues 823–843 (VALFFFILLQSAFFSTGNVAS). Residues 844–865 (VSSFSLDSVYRLIPIFDPFSQG) lie on the Cytoplasmic side of the membrane. Residues 866–886 (AMLILKLMIPFALISANLGIL) traverse the membrane as a helical segment. Over 887–895 (NKRLGVAPS) the chain is Lumenal. A helical transmembrane segment spans residues 896–916 (ALFMVVMGISDILTLYFFWVV). Residues 917–932 (KDEGSWLEIGSTISHF) lie on the Cytoplasmic side of the membrane. The helical transmembrane segment at 933–953 (VIASLLCVFVSALEPVSAAFI) threads the bilayer. Over 954–996 (AGVEVGEESELKEEGKVAEKVVEKVNEAVEGLVSGGDGGGDES) the chain is Lumenal.

It belongs to the PIGG/PIGN/PIGO family. PIGN subfamily.

The protein resides in the endoplasmic reticulum membrane. It participates in glycolipid biosynthesis; glycosylphosphatidylinositol-anchor biosynthesis. Its function is as follows. Ethanolamine phosphate transferase involved in glycosylphosphatidylinositol-anchor biosynthesis. Transfers ethanolamine phosphate to the first alpha-1,4-linked mannose of the glycosylphosphatidylinositol precursor of GPI-anchor. The polypeptide is GPI ethanolamine phosphate transferase 1 (mcd-4) (Neurospora crassa (strain ATCC 24698 / 74-OR23-1A / CBS 708.71 / DSM 1257 / FGSC 987)).